Here is a 350-residue protein sequence, read N- to C-terminus: Dihydroorotase (350 aa).

Zn(2+) contacts are provided by His-13 and His-15. Substrate contacts are provided by residues 15–17 and Asn-41; that span reads HLR. Zn(2+)-binding residues include Lys-99, His-136, and His-174. Position 99 is an N6-carboxylysine (Lys-99). His-136 lines the substrate pocket. Leu-219 is a binding site for substrate. Asp-247 is a Zn(2+) binding site. Residue Asp-247 is part of the active site. Residues His-251 and Ala-263 each contribute to the substrate site.

Belongs to the metallo-dependent hydrolases superfamily. DHOase family. Class II DHOase subfamily. In terms of assembly, homodimer. The cofactor is Zn(2+).

The enzyme catalyses (S)-dihydroorotate + H2O = N-carbamoyl-L-aspartate + H(+). The protein operates within pyrimidine metabolism; UMP biosynthesis via de novo pathway; (S)-dihydroorotate from bicarbonate: step 3/3. In terms of biological role, catalyzes the reversible cyclization of carbamoyl aspartate to dihydroorotate. In Allorhizobium ampelinum (strain ATCC BAA-846 / DSM 112012 / S4) (Agrobacterium vitis (strain S4)), this protein is Dihydroorotase.